Reading from the N-terminus, the 206-residue chain is Large ribosomal subunit protein uL4 (206 aa).

The protein belongs to the universal ribosomal protein uL4 family. In terms of assembly, part of the 50S ribosomal subunit.

One of the primary rRNA binding proteins, this protein initially binds near the 5'-end of the 23S rRNA. It is important during the early stages of 50S assembly. It makes multiple contacts with different domains of the 23S rRNA in the assembled 50S subunit and ribosome. Functionally, forms part of the polypeptide exit tunnel. The sequence is that of Large ribosomal subunit protein uL4 from Bradyrhizobium diazoefficiens (strain JCM 10833 / BCRC 13528 / IAM 13628 / NBRC 14792 / USDA 110).